Here is a 119-residue protein sequence, read N- to C-terminus: Ribosome-binding factor A (119 aa).

It belongs to the RbfA family. As to quaternary structure, monomer. Binds 30S ribosomal subunits, but not 50S ribosomal subunits or 70S ribosomes.

The protein localises to the cytoplasm. Its function is as follows. One of several proteins that assist in the late maturation steps of the functional core of the 30S ribosomal subunit. Associates with free 30S ribosomal subunits (but not with 30S subunits that are part of 70S ribosomes or polysomes). Required for efficient processing of 16S rRNA. May interact with the 5'-terminal helix region of 16S rRNA. In Coxiella burnetii (strain CbuG_Q212) (Coxiella burnetii (strain Q212)), this protein is Ribosome-binding factor A.